Reading from the N-terminus, the 184-residue chain is Large ribosomal subunit protein uL15 (184 aa).

Residues 1 to 45 (MDLSSLRPAKGAVKNKKRVGRGQGSGNGTTAGKGNNGQQSRSGYK) form a disordered region. Over residues 21–35 (RGQGSGNGTTAGKGN) the composition is skewed to gly residues.

This sequence belongs to the universal ribosomal protein uL15 family. Part of the 50S ribosomal subunit.

Functionally, binds to the 23S rRNA. The polypeptide is Large ribosomal subunit protein uL15 (Pelodictyon phaeoclathratiforme (strain DSM 5477 / BU-1)).